A 299-amino-acid chain; its full sequence is 11-beta-hydroxysteroid dehydrogenase-like 4A (299 aa).

The chain crosses the membrane as a helical; Signal-anchor for type II membrane protein span at residues 10–30; the sequence is ILLPIVTVSFLLVFMPFSIFF. Residues 54–80 and D105 contribute to the NADP(+) site; that span reads GSSSGIGEHLAYEYARRGAYLTLVARR. S184 is a substrate binding site. The Proton acceptor role is filled by Y197. NADP(+)-binding positions include 197-201 and K201; that span reads YAASK.

Belongs to the short-chain dehydrogenases/reductases (SDR) family.

Its subcellular location is the membrane. The chain is 11-beta-hydroxysteroid dehydrogenase-like 4A (HSD4) from Arabidopsis thaliana (Mouse-ear cress).